We begin with the raw amino-acid sequence, 416 residues long: Secreted RxLR effector protein 25 (416 aa).

The N-terminal stretch at 1–20 (MRSWLLLLVGLSSYFALSTS) is a signal peptide. The RxLR-dEER motif lies at 49–88 (RKLRAPGGDTNTLKDSGKARREKKVWKLFCRVFLQLDDEK).

This sequence belongs to the RxLR effector family.

The protein localises to the secreted. It is found in the host cytoplasm. Its subcellular location is the host nucleus. In terms of biological role, effector that partially suppresses the tobacco programmed cell death induced by cell death-inducing proteins. The chain is Secreted RxLR effector protein 25 from Plasmopara viticola (Downy mildew of grapevine).